The chain runs to 156 residues: Photosystem I reaction center subunit XI (156 aa).

The next 2 membrane-spanning stretches (helical) occupy residues Gly-75–Ala-95 and Phe-128–Phe-148.

This sequence belongs to the PsaL family.

The protein resides in the cellular thylakoid membrane. This chain is Photosystem I reaction center subunit XI, found in Crocosphaera subtropica (strain ATCC 51142 / BH68) (Cyanothece sp. (strain ATCC 51142)).